The primary structure comprises 229 residues: 5'-methylthioadenosine/S-adenosylhomocysteine nucleosidase (229 aa).

Glutamate 12 (proton acceptor) is an active-site residue. Substrate is bound by residues glycine 78, isoleucine 152, and 173-174 (ME). Aspartate 197 functions as the Proton donor in the catalytic mechanism.

This sequence belongs to the PNP/UDP phosphorylase family. MtnN subfamily.

It catalyses the reaction S-adenosyl-L-homocysteine + H2O = S-(5-deoxy-D-ribos-5-yl)-L-homocysteine + adenine. It carries out the reaction S-methyl-5'-thioadenosine + H2O = 5-(methylsulfanyl)-D-ribose + adenine. The enzyme catalyses 5'-deoxyadenosine + H2O = 5-deoxy-D-ribose + adenine. The protein operates within amino-acid biosynthesis; L-methionine biosynthesis via salvage pathway; S-methyl-5-thio-alpha-D-ribose 1-phosphate from S-methyl-5'-thioadenosine (hydrolase route): step 1/2. Catalyzes the irreversible cleavage of the glycosidic bond in both 5'-methylthioadenosine (MTA) and S-adenosylhomocysteine (SAH/AdoHcy) to adenine and the corresponding thioribose, 5'-methylthioribose and S-ribosylhomocysteine, respectively. Also cleaves 5'-deoxyadenosine, a toxic by-product of radical S-adenosylmethionine (SAM) enzymes, into 5-deoxyribose and adenine. This Histophilus somni (strain 2336) (Haemophilus somnus) protein is 5'-methylthioadenosine/S-adenosylhomocysteine nucleosidase.